The following is a 436-amino-acid chain: 3-ketoacyl-CoA thiolase (436 aa).

Cysteine 99 (acyl-thioester intermediate) is an active-site residue. Active-site proton acceptor residues include histidine 392 and cysteine 422.

The protein belongs to the thiolase-like superfamily. Thiolase family. In terms of assembly, heterotetramer of two alpha chains (FadJ) and two beta chains (FadI).

It localises to the cytoplasm. It carries out the reaction an acyl-CoA + acetyl-CoA = a 3-oxoacyl-CoA + CoA. It participates in lipid metabolism; fatty acid beta-oxidation. Functionally, catalyzes the final step of fatty acid oxidation in which acetyl-CoA is released and the CoA ester of a fatty acid two carbons shorter is formed. The chain is 3-ketoacyl-CoA thiolase from Salmonella paratyphi C (strain RKS4594).